The following is a 369-amino-acid chain: Phospho-N-acetylmuramoyl-pentapeptide-transferase (369 aa).

Helical transmembrane passes span 2-22, 55-75, 86-106, 122-142, 158-178, 196-216, 239-259, 266-286, 291-311, and 348-368; these read IALL…TPLF, TVVV…MWMM, ALLL…DDFI, LVLQ…FPNA, IPWL…FVLW, LDGL…LMGI, PLDL…FLWW, IFMG…FAIL, LLLA…IIQV, and ILGG…WVVL.

It belongs to the glycosyltransferase 4 family. MraY subfamily. Mg(2+) serves as cofactor.

The protein localises to the cell membrane. The enzyme catalyses UDP-N-acetyl-alpha-D-muramoyl-L-alanyl-gamma-D-glutamyl-meso-2,6-diaminopimeloyl-D-alanyl-D-alanine + di-trans,octa-cis-undecaprenyl phosphate = di-trans,octa-cis-undecaprenyl diphospho-N-acetyl-alpha-D-muramoyl-L-alanyl-D-glutamyl-meso-2,6-diaminopimeloyl-D-alanyl-D-alanine + UMP. It participates in cell wall biogenesis; peptidoglycan biosynthesis. Its function is as follows. Catalyzes the initial step of the lipid cycle reactions in the biosynthesis of the cell wall peptidoglycan: transfers peptidoglycan precursor phospho-MurNAc-pentapeptide from UDP-MurNAc-pentapeptide onto the lipid carrier undecaprenyl phosphate, yielding undecaprenyl-pyrophosphoryl-MurNAc-pentapeptide, known as lipid I. In Arthrobacter sp. (strain FB24), this protein is Phospho-N-acetylmuramoyl-pentapeptide-transferase.